The chain runs to 156 residues: Peptide deformylase 1 (156 aa).

The Fe cation site is built by cysteine 90 and histidine 132. Glutamate 133 is an active-site residue. Histidine 136 contacts Fe cation.

Belongs to the polypeptide deformylase family. Fe(2+) serves as cofactor.

The enzyme catalyses N-terminal N-formyl-L-methionyl-[peptide] + H2O = N-terminal L-methionyl-[peptide] + formate. Its function is as follows. Removes the formyl group from the N-terminal Met of newly synthesized proteins. Requires at least a dipeptide for an efficient rate of reaction. N-terminal L-methionine is a prerequisite for activity but the enzyme has broad specificity at other positions. The polypeptide is Peptide deformylase 1 (Bacillus cereus (strain ATCC 14579 / DSM 31 / CCUG 7414 / JCM 2152 / NBRC 15305 / NCIMB 9373 / NCTC 2599 / NRRL B-3711)).